The sequence spans 166 residues: Twist-related protein (166 aa).

A compositionally biased stretch (low complexity) spans 1–18; the sequence is MMQEESSSPVSPVDSLSN. Residues 1-83 are disordered; sequence MMQEESSSPV…RVMANVRERQ (83 aa). The span at 28–39 shows a compositional bias: basic residues; the sequence is SKRGCRKRRSAR. Polar residues predominate over residues 57–75; that stretch reads ASSTGSSPQSFEELQSQRV. In terms of domain architecture, bHLH spans 72 to 123; that stretch reads SQRVMANVRERQRTQSLNEAFSSLRKIIPTLPSDKLSKIQTLKLASRYIDFL.

Efficient DNA binding requires dimerization with another bHLH protein. Homodimer. In terms of tissue distribution, subset of mesodermal cells.

The protein localises to the nucleus. In terms of biological role, probable transcription factor, which may be involved, with other proteins, in establishing the pattern of cell type-specific gene expression in mesodermal cell subgroups. The polypeptide is Twist-related protein (twist1) (Xenopus laevis (African clawed frog)).